Reading from the N-terminus, the 246-residue chain is Probable septum site-determining protein MinC (246 aa).

The protein belongs to the MinC family. Interacts with MinD and FtsZ.

Functionally, cell division inhibitor that blocks the formation of polar Z ring septums. Rapidly oscillates between the poles of the cell to destabilize FtsZ filaments that have formed before they mature into polar Z rings. Prevents FtsZ polymerization. This chain is Probable septum site-determining protein MinC, found in Pseudomonas savastanoi pv. phaseolicola (strain 1448A / Race 6) (Pseudomonas syringae pv. phaseolicola (strain 1448A / Race 6)).